Here is a 184-residue protein sequence, read N- to C-terminus: Large ribosomal subunit protein uL22 (184 aa).

Belongs to the universal ribosomal protein uL22 family.

In Yarrowia lipolytica (strain CLIB 122 / E 150) (Yeast), this protein is Large ribosomal subunit protein uL22 (RPL17).